Here is a 695-residue protein sequence, read N- to C-terminus: Follicle-stimulating hormone receptor (695 aa).

A signal peptide spans 1 to 17 (MALLLVSLLAFLSLGSG). Cystine bridges form between Cys18-Cys25 and Cys23-Cys32. An LRRNT domain is found at 18–46 (CHHRICHCSNRVFLCQESKVTEIPSDLPR). Residues 18–366 (CHHRICHCSN…EDIMGYNILR (349 aa)) are Extracellular-facing. 9 LRR repeats span residues 49 to 72 (IELR…FGDL), 73 to 97 (EKIE…LPKL), 98 to 118 (HEIR…AFQN), 119 to 143 (LPNL…KIHS), 144 to 169 (LQKV…VGLS), 170 to 192 (FESV…AFNG), 193 to 216 (TQLD…VFHG), 217 to 240 (ASGP…GLEN), and 241 to 259 (LKKL…PTLE). N-linked (GlcNAc...) asparagine glycans are attached at residues Asn191 and Asn199. 4 disulfide bridges follow: Cys275–Cys346, Cys276–Cys292, Cys276–Cys356, and Cys292–Cys338. Asn293 and Asn318 each carry an N-linked (GlcNAc...) asparagine glycan. A Sulfotyrosine modification is found at Tyr335. Residues 367-387 (VLIWFISILAITGNIIVLVIL) form a helical membrane-spanning segment. Residues 388 to 398 (TTSQYKLTVPR) lie on the Cytoplasmic side of the membrane. The chain crosses the membrane as a helical span at residues 399-421 (FLMCNLAFADLCIGIYLLLIASV). The Extracellular segment spans residues 422–443 (DIHTKSQYHNYAIDWQTGAGCD). The cysteines at positions 442 and 517 are disulfide-linked. Residues 444-465 (AAGFFTVFASELSVYTLTAITL) traverse the membrane as a helical segment. Residues 466 to 485 (ERWHTITHAMQLDCKVQLRH) are Cytoplasmic-facing. The chain crosses the membrane as a helical span at residues 486-508 (AASVMVMGWIFAFAAALFPIFGI). Over 509 to 528 (SSYMKVSICLPMDIDSPLSQ) the chain is Extracellular. A helical membrane pass occupies residues 529 to 550 (LYVMSLLVLNVLAFVVICGCYI). The Cytoplasmic portion of the chain corresponds to 551–573 (HIYLTVRNPNIVSSSSDTRIAKR). A helical transmembrane segment spans residues 574 to 597 (MAMLIFTDFLCMAPISFFAISASL). Residues 598–608 (KVPLITVSKAK) are Extracellular-facing. The helical transmembrane segment at 609 to 630 (ILLVLFHPINSCANPFLYAIFT) threads the bilayer. Over 631–695 (KNFRRDFFIL…LVPLSHLAQN (65 aa)) the chain is Cytoplasmic.

This sequence belongs to the G-protein coupled receptor 1 family. FSH/LSH/TSH subfamily. In terms of assembly, homotrimer. Functions as a homotrimer binding the FSH hormone heterodimer composed of CGA and FSHB. Interacts with ARRB2. Interacts with APPL2; interaction is independent of follicle stimulating hormone stimulation. In terms of processing, sulfated. N-glycosylated; indirectly required for FSH-binding, possibly via a conformational change that allows high affinity binding of hormone. In terms of tissue distribution, sertoli cells and ovarian granulosa cells.

The protein resides in the cell membrane. Its function is as follows. G protein-coupled receptor for follitropin, the follicle-stimulating hormone. Through cAMP production activates the downstream PI3K-AKT and ERK1/ERK2 signaling pathways. The protein is Follicle-stimulating hormone receptor (FSHR) of Homo sapiens (Human).